The primary structure comprises 165 residues: Large ribosomal subunit protein uL10 (165 aa).

This sequence belongs to the universal ribosomal protein uL10 family. As to quaternary structure, part of the ribosomal stalk of the 50S ribosomal subunit. The N-terminus interacts with L11 and the large rRNA to form the base of the stalk. The C-terminus forms an elongated spine to which L12 dimers bind in a sequential fashion forming a multimeric L10(L12)X complex.

Its function is as follows. Forms part of the ribosomal stalk, playing a central role in the interaction of the ribosome with GTP-bound translation factors. This Serratia proteamaculans (strain 568) protein is Large ribosomal subunit protein uL10.